The primary structure comprises 89 residues: Small ribosomal subunit protein uS17 (89 aa).

This sequence belongs to the universal ribosomal protein uS17 family. Part of the 30S ribosomal subunit.

In terms of biological role, one of the primary rRNA binding proteins, it binds specifically to the 5'-end of 16S ribosomal RNA. The sequence is that of Small ribosomal subunit protein uS17 from Polaromonas sp. (strain JS666 / ATCC BAA-500).